The chain runs to 219 residues: Large ribosomal subunit protein uL3 (219 aa).

A disordered region spans residues 133–153 (GRASHGNSRSHNVPGSIGMAQ). At glutamine 153 the chain carries N5-methylglutamine.

Belongs to the universal ribosomal protein uL3 family. In terms of assembly, part of the 50S ribosomal subunit. Forms a cluster with proteins L14 and L19. Methylated by PrmB.

In terms of biological role, one of the primary rRNA binding proteins, it binds directly near the 3'-end of the 23S rRNA, where it nucleates assembly of the 50S subunit. This chain is Large ribosomal subunit protein uL3, found in Burkholderia thailandensis (strain ATCC 700388 / DSM 13276 / CCUG 48851 / CIP 106301 / E264).